The chain runs to 212 residues: 3,4-dihydroxy-2-butanone 4-phosphate synthase (212 aa).

D-ribulose 5-phosphate is bound by residues 37 to 38, D42, 150 to 154, and E174; these read RE and RRGHT. Position 38 (E38) interacts with Mg(2+). H153 serves as a coordination point for Mg(2+).

This sequence belongs to the DHBP synthase family. Homodimer. Mg(2+) serves as cofactor. The cofactor is Mn(2+).

The catalysed reaction is D-ribulose 5-phosphate = (2S)-2-hydroxy-3-oxobutyl phosphate + formate + H(+). The protein operates within cofactor biosynthesis; riboflavin biosynthesis; 2-hydroxy-3-oxobutyl phosphate from D-ribulose 5-phosphate: step 1/1. Its function is as follows. Catalyzes the conversion of D-ribulose 5-phosphate to formate and 3,4-dihydroxy-2-butanone 4-phosphate. This is 3,4-dihydroxy-2-butanone 4-phosphate synthase from Histophilus somni (strain 129Pt) (Haemophilus somnus).